The following is a 184-amino-acid chain: Small ribosomal subunit protein bS16 (184 aa).

Positions 150–160 are enriched in basic and acidic residues; sequence KKAAEAAEKAA. A disordered region spans residues 150–184; the sequence is KKAAEAAEKAAAEAPAEEATEAPAEEAAATEAAAE. Acidic residues predominate over residues 164 to 173; the sequence is PAEEATEAPA. Low complexity predominate over residues 174 to 184; it reads EEAAATEAAAE.

The protein belongs to the bacterial ribosomal protein bS16 family.

This is Small ribosomal subunit protein bS16 from Bacteroides thetaiotaomicron (strain ATCC 29148 / DSM 2079 / JCM 5827 / CCUG 10774 / NCTC 10582 / VPI-5482 / E50).